Reading from the N-terminus, the 114-residue chain is UPF0145 protein TTHA1944 (114 aa).

It belongs to the UPF0145 family.

The chain is UPF0145 protein TTHA1944 from Thermus thermophilus (strain ATCC 27634 / DSM 579 / HB8).